Here is a 73-residue protein sequence, read N- to C-terminus: Sec-independent protein translocase protein TatA (73 aa).

Residues 1 to 21 (MGSFSIGHWLIVLAIIVLLFG) traverse the membrane as a helical segment. The tract at residues 43 to 73 (MEDTTPEKSEKVEHKEESATSQKIEETTKNA) is disordered.

This sequence belongs to the TatA/E family. The Tat system comprises two distinct complexes: a TatABC complex, containing multiple copies of TatA, TatB and TatC subunits, and a separate TatA complex, containing only TatA subunits. Substrates initially bind to the TatABC complex, which probably triggers association of the separate TatA complex to form the active translocon.

Its subcellular location is the cell inner membrane. Functionally, part of the twin-arginine translocation (Tat) system that transports large folded proteins containing a characteristic twin-arginine motif in their signal peptide across membranes. TatA could form the protein-conducting channel of the Tat system. This is Sec-independent protein translocase protein TatA from Campylobacter concisus (strain 13826).